Consider the following 834-residue polypeptide: Glycerol-3-phosphate acyltransferase (834 aa).

Positions 309–314 (CHRSHI) match the HXXXXD motif motif.

This sequence belongs to the GPAT/DAPAT family.

Its subcellular location is the cell inner membrane. It carries out the reaction sn-glycerol 3-phosphate + an acyl-CoA = a 1-acyl-sn-glycero-3-phosphate + CoA. It participates in phospholipid metabolism; CDP-diacylglycerol biosynthesis; CDP-diacylglycerol from sn-glycerol 3-phosphate: step 1/3. The sequence is that of Glycerol-3-phosphate acyltransferase from Pseudomonas paraeruginosa (strain DSM 24068 / PA7) (Pseudomonas aeruginosa (strain PA7)).